The chain runs to 179 residues: Large ribosomal subunit protein uL6 (179 aa).

The disordered stretch occupies residues 151 to 179 (RKPEPYKGKGIKYDNEQIRRKAGKSGGKK). Residues 152-169 (KPEPYKGKGIKYDNEQIR) show a composition bias toward basic and acidic residues. Over residues 170 to 179 (RKAGKSGGKK) the composition is skewed to basic residues.

Belongs to the universal ribosomal protein uL6 family. Part of the 50S ribosomal subunit.

Its function is as follows. This protein binds to the 23S rRNA, and is important in its secondary structure. It is located near the subunit interface in the base of the L7/L12 stalk, and near the tRNA binding site of the peptidyltransferase center. This is Large ribosomal subunit protein uL6 from Nitratidesulfovibrio vulgaris (strain ATCC 29579 / DSM 644 / CCUG 34227 / NCIMB 8303 / VKM B-1760 / Hildenborough) (Desulfovibrio vulgaris).